The sequence spans 345 residues: Probable dual-specificity RNA methyltransferase RlmN (345 aa).

The active-site Proton acceptor is the glutamate 98. The Radical SAM core domain maps to 104-332 (TYKRLTVCVS…VSIRYSRGLE (229 aa)). Cysteine 111 and cysteine 337 form a disulfide bridge. Positions 118, 122, and 125 each coordinate [4Fe-4S] cluster. Residues 165 to 166 (GE), serine 195, 218 to 220 (SLH), and asparagine 294 contribute to the S-adenosyl-L-methionine site. Cysteine 337 (S-methylcysteine intermediate) is an active-site residue.

Belongs to the radical SAM superfamily. RlmN family. The cofactor is [4Fe-4S] cluster.

The protein resides in the cytoplasm. It carries out the reaction adenosine(2503) in 23S rRNA + 2 reduced [2Fe-2S]-[ferredoxin] + 2 S-adenosyl-L-methionine = 2-methyladenosine(2503) in 23S rRNA + 5'-deoxyadenosine + L-methionine + 2 oxidized [2Fe-2S]-[ferredoxin] + S-adenosyl-L-homocysteine. The enzyme catalyses adenosine(37) in tRNA + 2 reduced [2Fe-2S]-[ferredoxin] + 2 S-adenosyl-L-methionine = 2-methyladenosine(37) in tRNA + 5'-deoxyadenosine + L-methionine + 2 oxidized [2Fe-2S]-[ferredoxin] + S-adenosyl-L-homocysteine. In terms of biological role, specifically methylates position 2 of adenine 2503 in 23S rRNA and position 2 of adenine 37 in tRNAs. This Trichodesmium erythraeum (strain IMS101) protein is Probable dual-specificity RNA methyltransferase RlmN.